Here is a 105-residue protein sequence, read N- to C-terminus: AAFALPALASSFEKDVISFRAIQAVLEKRGLSKLEDDPVLSALAHTKTIISNPVIEEALLNGANLKAGNGIPCAESCVWIPCTVTALIGCGCSNKVCYNSLQTKY.

An N-terminal signal peptide occupies residues 1 to 9 (AAFALPALA). Residues 10–69 (SSFEKDVISFRAIQAVLEKRGLSKLEDDPVLSALAHTKTIISNPVIEEALLNGANLKAGN) constitute a propeptide that is removed on maturation. Positions 70 to 99 (GIPCAESCVWIPCTVTALIGCGCSNKVCYN) form a cross-link, cyclopeptide (Gly-Asn). Intrachain disulfides connect C73-C90, C77-C92, and C82-C97. The propeptide occupies 100-105 (SLQTKY).

This is a cyclic peptide.

Functionally, probably participates in a plant defense mechanism. Has cytotoxic activity, active against a human lymphoma cell line with an IC(50) of 3.2 uM. The protein is Cyclotide vibi-E of Viola biflora (Yellow wood violet).